The chain runs to 324 residues: Protein GET4 (324 aa).

It belongs to the GET4 family. Interacts with GET3A.

The protein localises to the cytoplasm. Its subcellular location is the cytosol. Involved in the regulation of root hair growth. This chain is Protein GET4, found in Arabidopsis thaliana (Mouse-ear cress).